Consider the following 214-residue polypeptide: Pyrrolidone-carboxylate peptidase (214 aa).

Active-site residues include Glu-79, Cys-142, and His-166.

The protein belongs to the peptidase C15 family. In terms of assembly, homotetramer.

The protein localises to the cytoplasm. It catalyses the reaction Release of an N-terminal pyroglutamyl group from a polypeptide, the second amino acid generally not being Pro.. Its function is as follows. Removes 5-oxoproline from various penultimate amino acid residues except L-proline. This is Pyrrolidone-carboxylate peptidase from Fusobacterium nucleatum subsp. nucleatum (strain ATCC 25586 / DSM 15643 / BCRC 10681 / CIP 101130 / JCM 8532 / KCTC 2640 / LMG 13131 / VPI 4355).